The primary structure comprises 525 residues: Probable protein kinase UbiB (525 aa).

The region spanning 118–500 is the Protein kinase domain; sequence DFERVPVASA…QKRTNRLLQG (383 aa). Residues 124–132 and K150 each bind ATP; that span reads VASASIAQV. Catalysis depends on D285, which acts as the Proton acceptor. The chain crosses the membrane as a helical span at residues 501–521; sequence LLLFGVAVGVGAALARVFLAL.

This sequence belongs to the ABC1 family. UbiB subfamily.

It localises to the cell inner membrane. The protein operates within cofactor biosynthesis; ubiquinone biosynthesis [regulation]. Is probably a protein kinase regulator of UbiI activity which is involved in aerobic coenzyme Q (ubiquinone) biosynthesis. This Paraburkholderia xenovorans (strain LB400) protein is Probable protein kinase UbiB.